Here is a 508-residue protein sequence, read N- to C-terminus: Aldehyde dehydrogenase family 7 member A1 (508 aa).

244–249 (GSSKVG) provides a ligand contact to NAD(+). Catalysis depends on Glu-266, which acts as the Proton acceptor. The Nucleophile role is filled by Cys-300.

This sequence belongs to the aldehyde dehydrogenase family. As to quaternary structure, homotetramer.

It carries out the reaction an aldehyde + NAD(+) + H2O = a carboxylate + NADH + 2 H(+). Functionally, may play a role in fruit development. This chain is Aldehyde dehydrogenase family 7 member A1, found in Malus domestica (Apple).